A 638-amino-acid polypeptide reads, in one-letter code: Ubiquitin-associated and SH3 domain-containing protein B (638 aa).

Ser9 carries the post-translational modification Phosphoserine. Residue Thr12 is modified to Phosphothreonine. Residues 23-65 (TVKHGSALDVLLSMGFPRARAQKALASTGGRSVQAACDWLFSH) enclose the UBA domain. In terms of domain architecture, SH3 spans 243-308 (ANHETLQVIY…PENYITKADE (66 aa)). Residues 369-638 (GPQKRCLFVC…FNWRETLLQE (270 aa)) are protein tyrosine phosphatase. Arg379 is an active-site residue. Residue His380 is the Tele-phosphohistidine intermediate of the active site. His565 is an active-site residue.

Homodimer. Interacts with JAK2 (in vitro). Interacts with CBL. Part of a complex containing CBL and activated EGFR. Interacts with ubiquitin and with mono-ubiquitinated proteins. Interacts with ZAP70 (ubiquitinated form). Detected in splenic T-cells and B-cells, total spleen, skeletal muscle, heart, lung, kidney, thymus, brain and liver (at protein level). Highly expressed in brain. Detected in heart, spleen, lung, liver, kidney and testis.

The protein localises to the cytoplasm. It is found in the nucleus. It catalyses the reaction O-phospho-L-tyrosyl-[protein] + H2O = L-tyrosyl-[protein] + phosphate. Functionally, interferes with CBL-mediated down-regulation and degradation of receptor-type tyrosine kinases. Promotes accumulation of activated target receptors, such as T-cell receptors and EGFR, on the cell surface. Exhibits tyrosine phosphatase activity toward several substrates including EGFR, FAK, SYK, and ZAP70. Down-regulates proteins that are dually modified by both protein tyrosine phosphorylation and ubiquitination. This is Ubiquitin-associated and SH3 domain-containing protein B (Ubash3b) from Mus musculus (Mouse).